The sequence spans 257 residues: Probable S-adenosylmethionine-dependent methyltransferase MSMEG_2350/MSMEI_2290 (257 aa).

This sequence belongs to the methyltransferase superfamily.

In terms of biological role, probable S-adenosylmethionine-dependent methyltransferase required for the 6-O-methylation of the polysaccharide backbone of 6-O-methylglucosyl lipopolysaccharides (MGLP). The polypeptide is Probable S-adenosylmethionine-dependent methyltransferase MSMEG_2350/MSMEI_2290 (Mycolicibacterium smegmatis (strain ATCC 700084 / mc(2)155) (Mycobacterium smegmatis)).